A 92-amino-acid polypeptide reads, in one-letter code: Putative membrane protein insertion efficiency factor (92 aa).

This sequence belongs to the UPF0161 family.

It is found in the cell inner membrane. Its function is as follows. Could be involved in insertion of integral membrane proteins into the membrane. The chain is Putative membrane protein insertion efficiency factor from Synechococcus sp. (strain CC9605).